A 377-amino-acid chain; its full sequence is MPRRLQPRGAGTKGPPAPAPAASGAARNSHSAASRDPPASAKPLLRWDEVPDDFVECFILSGYRRLPCTAQECLASVLKPTNETLNFWTHFIPLLLFLSKFCRLFFLSGGDVPFHHPWLLPLWCYASGVLLTFAMSCTAHVFSCLSLRLRAAFFYLDYASISYYGFGSTVAYYYYLLPGLSLLDARVMTPYLQQRLGWHVDCTRLIAAYRALVLPVAFVLAVACTVACCKSRTDWCTYPFALRTFVFVMPLSMACPIMLESWLFDLRGENPTLFVHFYRRYFWLVVAAFFNVSKIPERIQPGLFDIIGHSHQLFHIFTFLSIYDQVYYVEEGLRQFLQAPPAAPTFSGTVGYMLLLVVCLGLVIRKFLNSSEFCSKK.

The segment at 1-40 (MPRRLQPRGAGTKGPPAPAPAASGAARNSHSAASRDPPAS) is disordered. Over 1–86 (MPRRLQPRGA…VLKPTNETLN (86 aa)) the chain is Cytoplasmic. Low complexity predominate over residues 9 to 26 (GAGTKGPPAPAPAASGAA). A helical membrane pass occupies residues 87–107 (FWTHFIPLLLFLSKFCRLFFL). Topologically, residues 108–116 (SGGDVPFHH) are extracellular. Residues 117–137 (PWLLPLWCYASGVLLTFAMSC) form a helical membrane-spanning segment. Residues 138 to 162 (TAHVFSCLSLRLRAAFFYLDYASIS) lie on the Cytoplasmic side of the membrane. The chain crosses the membrane as a helical span at residues 163 to 183 (YYGFGSTVAYYYYLLPGLSLL). The Extracellular portion of the chain corresponds to 184 to 205 (DARVMTPYLQQRLGWHVDCTRL). Residues 206–226 (IAAYRALVLPVAFVLAVACTV) form a helical membrane-spanning segment. Over 227 to 243 (ACCKSRTDWCTYPFALR) the chain is Cytoplasmic. Residues 244-264 (TFVFVMPLSMACPIMLESWLF) traverse the membrane as a helical segment. Over 265 to 301 (DLRGENPTLFVHFYRRYFWLVVAAFFNVSKIPERIQP) the chain is Extracellular. A helical transmembrane segment spans residues 302–322 (GLFDIIGHSHQLFHIFTFLSI). Residues 323-343 (YDQVYYVEEGLRQFLQAPPAA) lie on the Cytoplasmic side of the membrane. A helical transmembrane segment spans residues 344 to 364 (PTFSGTVGYMLLLVVCLGLVI). At 365-377 (RKFLNSSEFCSKK) the chain is on the extracellular side.

This sequence belongs to the ADIPOR family. In terms of assembly, homodimer. Expression levels vary widely in a range of tissues. Expressed in the brain, at high level in the pituitary gland and also in hypothalamus, limbic system, caudate nucleus accumens, pons and olfactory bulb.

Its subcellular location is the cell membrane. In terms of biological role, plasma membrane progesterone (P4) receptor coupled to G proteins. Seems to act through a G(s) mediated pathway. May be involved in regulating rapid P4 signaling in the nervous system. Also binds dehydroepiandrosterone (DHEA), pregnanolone, pregnenolone and allopregnanolone. This chain is Membrane progestin receptor epsilon, found in Homo sapiens (Human).